Consider the following 99-residue polypeptide: YcgL domain-containing protein HD_1373 (99 aa).

The 85-residue stretch at 8-92 folds into the YcgL domain; that stretch reads NFCAIYKSMS…PAENLLKQFL (85 aa).

This is YcgL domain-containing protein HD_1373 from Haemophilus ducreyi (strain 35000HP / ATCC 700724).